A 755-amino-acid chain; its full sequence is Glucosylglycerol-phosphate synthase (755 aa).

It belongs to the glycosyltransferase 20 family.

It carries out the reaction ADP-alpha-D-glucose + sn-glycerol 3-phosphate = 2-O-(alpha-D-glucopyranosyl)-sn-glycerol 3-phosphate + ADP + H(+). It participates in glycan metabolism; glucosylglycerol biosynthesis. In terms of biological role, involved in salt tolerance by producing GG-phosphate from ADP-glucose and glycerol-3-phosphate (G3P), an intermediate in the synthesis of the osmolyte glucosylglycerol (GG). The polypeptide is Glucosylglycerol-phosphate synthase (ggpS) (Pseudomonas anguilliseptica).